The primary structure comprises 156 residues: Small ribosomal subunit protein uS7 (156 aa).

It belongs to the universal ribosomal protein uS7 family. As to quaternary structure, part of the 30S ribosomal subunit. Contacts proteins S9 and S11.

Functionally, one of the primary rRNA binding proteins, it binds directly to 16S rRNA where it nucleates assembly of the head domain of the 30S subunit. Is located at the subunit interface close to the decoding center, probably blocks exit of the E-site tRNA. This Haemophilus influenzae (strain 86-028NP) protein is Small ribosomal subunit protein uS7.